The primary structure comprises 180 residues: Large ribosomal subunit protein uL6 (180 aa).

This sequence belongs to the universal ribosomal protein uL6 family. In terms of assembly, part of the 50S ribosomal subunit.

In terms of biological role, this protein binds to the 23S rRNA, and is important in its secondary structure. It is located near the subunit interface in the base of the L7/L12 stalk, and near the tRNA binding site of the peptidyltransferase center. The chain is Large ribosomal subunit protein uL6 from Borrelia hermsii (strain HS1 / DAH).